The chain runs to 374 residues: MYLANFELKDFRNFKELKTDFDPHVNIFIGPNAQGKTNLLEAIYFLALTRSHRTNSDKELIRFGSKFAGLQGRVHKSQLQVELKLRLTANGKKAWVNRLEQKKLSAYVGQMNAILFSPEDLALVKGAPSVRRRFMDLEFGQINSEYLYFSSQYRQVLQQRNNYLKQLSIKKANDQVFLDVLSDQLAGIAAEIISRRIKYIKKLNSYAKAAHSEISGQAEKLQIFYRPSVKEIIPEDNVETIYRKVITSYKKNRPNEIRKGTTLSGPHRDDLEFLINEKNAHDFASQGQQRTISLSVKLAEIQLVHELTQEYPILLLDDVMSELDHRRQSRLLNYIHGKTQTFITTTDLEGISWEIVKEPKVYHISAGTISAKES.

An ATP-binding site is contributed by 30–37 (GPNAQGKT).

This sequence belongs to the RecF family.

It localises to the cytoplasm. The RecF protein is involved in DNA metabolism; it is required for DNA replication and normal SOS inducibility. RecF binds preferentially to single-stranded, linear DNA. It also seems to bind ATP. The polypeptide is DNA replication and repair protein RecF (Lactobacillus gasseri (strain ATCC 33323 / DSM 20243 / BCRC 14619 / CIP 102991 / JCM 1131 / KCTC 3163 / NCIMB 11718 / NCTC 13722 / AM63)).